The chain runs to 427 residues: MNTESVVEFLGNVPLLQKLPSSSLKKIAQVVVPKRYGKGDYVVREDQTWDGCYFILQGEAQVSGPDEEDNRSEFLLKQYDYFGVGLSGNVHSADIVAMSQLTCLVLPRDHCHLLETNSIWQSDTSLDKCSLVERILQLDPLELNIFRGITLPDAPIFGKVFGGQFVGQALAAASKTVDFLKVVHSLHSYFLLVGDIDIPIIYQVHRIRDGNNFATRRVDAVQKGNIIFILLASFQKEQQGFEHQESTMPSVPDPDTLLSLEELRESRITDPHLPRSYRNKVATRNFVPWPIEIRFCEPSNSTNQTKSPPRLNYWFRAKGRLSDDQALHRCVVAFASDLIFCGVGLNPHRRKGVKSAALSLDHAMWFHRPLRADEWLLYVIVSPTAHETRGFVTGQMFNRKGELVVSLTQEALLREARPPKPSGTSKL.

15 to 83 (LLQKLPSSSL…FLLKQYDYFG (69 aa)) contacts a nucleoside 3',5'-cyclic phosphate. Residues Asp337, Ser359, and Gln409 each act as charge relay system in the active site. A Microbody targeting signal motif is present at residues 425 to 427 (SKL).

This sequence belongs to the C/M/P thioester hydrolase family. As to quaternary structure, homotetramer. Mostly expressed in leaves and flowers, and, to a lower extent, in seedlings and siliques.

Its subcellular location is the peroxisome matrix. The enzyme catalyses a fatty acyl-CoA + H2O = a fatty acid + CoA + H(+). It carries out the reaction dodecanoyl-CoA + H2O = dodecanoate + CoA + H(+). It catalyses the reaction tetradecanoyl-CoA + H2O = tetradecanoate + CoA + H(+). The catalysed reaction is octadecanoyl-CoA + H2O = octadecanoate + CoA + H(+). The enzyme catalyses (9Z)-hexadecenoyl-CoA + H2O = (9Z)-hexadecenoate + CoA + H(+). It carries out the reaction (5Z,8Z,11Z,14Z)-eicosatetraenoyl-CoA + H2O = (5Z,8Z,11Z,14Z)-eicosatetraenoate + CoA + H(+). It catalyses the reaction hexadecanoyl-CoA + H2O = hexadecanoate + CoA + H(+). The catalysed reaction is (9Z)-octadecenoyl-CoA + H2O = (9Z)-octadecenoate + CoA + H(+). The enzyme catalyses (9Z,12Z)-octadecadienoyl-CoA + H2O = (9Z,12Z)-octadecadienoate + CoA + H(+). It functions in the pathway lipid metabolism; fatty acid metabolism. Its activity is regulated as follows. Insensitive to feedback inhibition by free coenzyme A (CoASH). Catalyzes the hydrolysis of acyl-CoAs into free fatty acids and coenzyme A (CoASH), regulating their respective intracellular levels. Active with both medium chain and long chain acyl-CoAs (e.g. 12:0-CoA, 14:0-CoA, 16:0-CoA, 18:0-CoA, 16:1-CoA, 18:1-CoA, 18:2-CoA and 20:4-CoA) as substrates, palmitoleoyl-CoA (16:1-CoA) being the favorite substrate. The chain is Acyl-CoA hydrolase 2 from Arabidopsis thaliana (Mouse-ear cress).